The primary structure comprises 357 residues: Protein-glutamate methylesterase/protein-glutamine glutaminase 5 (357 aa).

Residues 10–127 (RVLVVDDSSF…IDAQKAFKEE (118 aa)) form the Response regulatory domain. D61 is subject to 4-aspartylphosphate. One can recognise a CheB-type methylesterase domain in the interval 161-357 (PRPAGQRYQY…IGTEITKIAG (197 aa)). Active-site residues include S176, H203, and D301.

It belongs to the CheB family. Phosphorylated by CheA. Phosphorylation of the N-terminal regulatory domain activates the methylesterase activity.

The protein localises to the cytoplasm. It catalyses the reaction [protein]-L-glutamate 5-O-methyl ester + H2O = L-glutamyl-[protein] + methanol + H(+). The enzyme catalyses L-glutaminyl-[protein] + H2O = L-glutamyl-[protein] + NH4(+). Involved in chemotaxis. Part of a chemotaxis signal transduction system that modulates chemotaxis in response to various stimuli. Catalyzes the demethylation of specific methylglutamate residues introduced into the chemoreceptors (methyl-accepting chemotaxis proteins or MCP) by CheR. Also mediates the irreversible deamidation of specific glutamine residues to glutamic acid. This chain is Protein-glutamate methylesterase/protein-glutamine glutaminase 5, found in Geobacter metallireducens (strain ATCC 53774 / DSM 7210 / GS-15).